The primary structure comprises 396 residues: Deoxyuridine 5'-triphosphate nucleotidohydrolase (396 aa).

Residues 280 to 282 (RSS) and 380 to 381 (FG) each bind substrate.

The protein belongs to the dUTPase family. Mg(2+) serves as cofactor.

It catalyses the reaction dUTP + H2O = dUMP + diphosphate + H(+). In terms of biological role, involved in nucleotide metabolism: produces dUMP, the immediate precursor of thymidine nucleotides and decreases the intracellular concentration of dUTP to avoid uracil incorporation into viral DNA. The protein is Deoxyuridine 5'-triphosphate nucleotidohydrolase of Homo sapiens (Human).